Consider the following 128-residue polypeptide: Iron-sulfur cluster insertion protein ErpA (128 aa).

Cys-56, Cys-120, and Cys-122 together coordinate iron-sulfur cluster.

Belongs to the HesB/IscA family. As to quaternary structure, homodimer. Iron-sulfur cluster serves as cofactor.

In terms of biological role, required for insertion of 4Fe-4S clusters for at least IspG. This chain is Iron-sulfur cluster insertion protein ErpA, found in Xanthomonas euvesicatoria pv. vesicatoria (strain 85-10) (Xanthomonas campestris pv. vesicatoria).